The sequence spans 62 residues: uncharacterized protein (62 aa).

The protein localises to the plastid. It is found in the chloroplast. This is an uncharacterized protein from Chlamydomonas reinhardtii (Chlamydomonas smithii).